Here is a 494-residue protein sequence, read N- to C-terminus: Sulfate adenylyltransferase subunit 1 (494 aa).

Residues 28-242 (TRPLRLITCG…TLELATVRST (215 aa)) enclose the tr-type G domain. The tract at residues 37–44 (GSVDDGKS) is G1. GTP is bound at residue 37–44 (GSVDDGKS). Residues 94–98 (GITID) form a G2 region. Residues 115–118 (DTPG) form a G3 region. GTP-binding positions include 115-119 (DTPGH) and 170-173 (NKID). Residues 170 to 173 (NKID) are G4. Residues 207-209 (SAL) are G5.

Belongs to the TRAFAC class translation factor GTPase superfamily. Classic translation factor GTPase family. CysN/NodQ subfamily. Heterodimer composed of CysD, the smaller subunit, and CysN.

The catalysed reaction is sulfate + ATP + H(+) = adenosine 5'-phosphosulfate + diphosphate. It functions in the pathway sulfur metabolism; hydrogen sulfide biosynthesis; sulfite from sulfate: step 1/3. Its function is as follows. With CysD forms the ATP sulfurylase (ATPS) that catalyzes the adenylation of sulfate producing adenosine 5'-phosphosulfate (APS) and diphosphate, the first enzymatic step in sulfur assimilation pathway. APS synthesis involves the formation of a high-energy phosphoric-sulfuric acid anhydride bond driven by GTP hydrolysis by CysN coupled to ATP hydrolysis by CysD. The polypeptide is Sulfate adenylyltransferase subunit 1 (Agrobacterium fabrum (strain C58 / ATCC 33970) (Agrobacterium tumefaciens (strain C58))).